The following is a 240-amino-acid chain: Large ribosomal subunit protein bL25 (240 aa).

Disordered regions lie at residues 1–20 and 220–240; these read MAENVLSAQKRTEQGKGPAR and PAAGAAPAKGGEAKGGDKGKK. A compositionally biased stretch (low complexity) spans 220–229; the sequence is PAAGAAPAKG. Basic and acidic residues predominate over residues 230-240; sequence GEAKGGDKGKK.

Belongs to the bacterial ribosomal protein bL25 family. CTC subfamily. As to quaternary structure, part of the 50S ribosomal subunit; part of the 5S rRNA/L5/L18/L25 subcomplex. Contacts the 5S rRNA. Binds to the 5S rRNA independently of L5 and L18.

Its function is as follows. This is one of the proteins that binds to the 5S RNA in the ribosome where it forms part of the central protuberance. The protein is Large ribosomal subunit protein bL25 of Anaeromyxobacter dehalogenans (strain 2CP-C).